The chain runs to 402 residues: 1-deoxy-D-xylulose 5-phosphate reductoisomerase (402 aa).

Positions 13, 14, 15, 16, and 126 each coordinate NADPH. Lysine 127 provides a ligand contact to 1-deoxy-D-xylulose 5-phosphate. Glutamate 128 is a binding site for NADPH. Aspartate 152 is a binding site for Mn(2+). The 1-deoxy-D-xylulose 5-phosphate site is built by serine 153, glutamate 154, serine 188, and histidine 211. Glutamate 154 is a binding site for Mn(2+). NADPH is bound at residue glycine 217. 4 residues coordinate 1-deoxy-D-xylulose 5-phosphate: serine 224, asparagine 229, lysine 230, and glutamate 233. Mn(2+) is bound at residue glutamate 233.

It belongs to the DXR family. Mg(2+) is required as a cofactor. The cofactor is Mn(2+).

It carries out the reaction 2-C-methyl-D-erythritol 4-phosphate + NADP(+) = 1-deoxy-D-xylulose 5-phosphate + NADPH + H(+). It participates in isoprenoid biosynthesis; isopentenyl diphosphate biosynthesis via DXP pathway; isopentenyl diphosphate from 1-deoxy-D-xylulose 5-phosphate: step 1/6. In terms of biological role, catalyzes the NADPH-dependent rearrangement and reduction of 1-deoxy-D-xylulose-5-phosphate (DXP) to 2-C-methyl-D-erythritol 4-phosphate (MEP). The chain is 1-deoxy-D-xylulose 5-phosphate reductoisomerase from Psychrobacter arcticus (strain DSM 17307 / VKM B-2377 / 273-4).